The sequence spans 664 residues: Armadillo repeat protein involved in nucleocytoplasmic transport Syo2 (664 aa).

The stretch at 77–119 (GLVSKLIDRISDDSVEVVVEATGALRNLAIEEGYSICMDMYRK) is one ARM repeat.

It belongs to the nuclear import and ribosome assembly adapter family. As to quaternary structure, forms a heterotrimeric complex with rpl5 and rpl11a or rpl11b; interaction of this complex with kap104 allows the nuclear import of the heterotrimer. Component of a hexameric 5S RNP precursor complex; this complex acts as a precursor for ribosome assembly.

The protein resides in the cytoplasm. The protein localises to the nucleus. Its function is as follows. Nuclear import adapter that specifically recruits the two functionally and topologically linked ribosomal proteins rpl5 and rpl11 (encoded by rpl11a and rpl11b). Guarantees that this cargo pair remains bound together from the time of synthesis in the cytoplasm until delivery to the nascent 5S rRNA in the nucleus. This is Armadillo repeat protein involved in nucleocytoplasmic transport Syo2 from Schizosaccharomyces pombe (strain 972 / ATCC 24843) (Fission yeast).